The following is a 471-amino-acid chain: V-type ATP synthase beta chain (471 aa).

This sequence belongs to the ATPase alpha/beta chains family.

Produces ATP from ADP in the presence of a proton gradient across the membrane. The V-type beta chain is a regulatory subunit. In Streptococcus pyogenes serotype M18 (strain MGAS8232), this protein is V-type ATP synthase beta chain.